The chain runs to 267 residues: Dihydropteroate synthase (267 aa).

The Pterin-binding domain maps to 1-251 (MTKTKIMGIL…NVELNAKLAK (251 aa)). A Mg(2+)-binding site is contributed by asparagine 11. Residues threonine 51, aspartate 84, asparagine 103, aspartate 167, lysine 203, and 239–241 (RVH) contribute to the (7,8-dihydropterin-6-yl)methyl diphosphate site.

This sequence belongs to the DHPS family. Homodimer. It depends on Mg(2+) as a cofactor.

The catalysed reaction is (7,8-dihydropterin-6-yl)methyl diphosphate + 4-aminobenzoate = 7,8-dihydropteroate + diphosphate. It functions in the pathway cofactor biosynthesis; tetrahydrofolate biosynthesis; 7,8-dihydrofolate from 2-amino-4-hydroxy-6-hydroxymethyl-7,8-dihydropteridine diphosphate and 4-aminobenzoate: step 1/2. Functionally, catalyzes the condensation of para-aminobenzoate (pABA) with 6-hydroxymethyl-7,8-dihydropterin diphosphate (DHPt-PP) to form 7,8-dihydropteroate (H2Pte), the immediate precursor of folate derivatives. The polypeptide is Dihydropteroate synthase (folP) (Staphylococcus aureus (strain MSSA476)).